The chain runs to 748 residues: EF-hand domain-containing family member C2 (748 aa).

DM10 domains follow at residues 75–182, 226–366, and 428–535; these read DKQV…VKMG, DRQV…RSKY, and VSNV…EQHA. EF-hand domains are found at residues 556 to 591 and 631 to 666; these read EQQK…LDVE and EKFS…FRLP.

Its subcellular location is the cytoplasm. The protein resides in the cytoskeleton. It localises to the cilium axoneme. Functionally, microtubule inner protein (MIP) part of the dynein-decorated doublet microtubules (DMTs) in cilia axoneme, which is required for motile cilia beating. In Danio rerio (Zebrafish), this protein is EF-hand domain-containing family member C2 (efhc2).